The primary structure comprises 241 residues: Proteasome subunit alpha type-5 (241 aa).

This sequence belongs to the peptidase T1A family. In terms of assembly, the 26S proteasome consists of a 20S proteasome core and two 19S regulatory subunits. The 20S proteasome core is composed of 28 subunits that are arranged in four stacked rings, resulting in a barrel-shaped structure. The two end rings are each formed by seven alpha subunits, and the two central rings are each formed by seven beta subunits. The catalytic chamber with the active sites is on the inside of the barrel.

The protein resides in the cytoplasm. It is found in the nucleus. Functionally, the proteasome is a multicatalytic proteinase complex which is characterized by its ability to cleave peptides with Arg, Phe, Tyr, Leu, and Glu adjacent to the leaving group at neutral or slightly basic pH. The proteasome has an ATP-dependent proteolytic activity. In Dictyostelium discoideum (Social amoeba), this protein is Proteasome subunit alpha type-5 (psmA5).